A 321-amino-acid polypeptide reads, in one-letter code: Fe-S cluster assembly protein DRE2 (321 aa).

The N-terminal SAM-like domain stretch occupies residues 1–140; sequence MNNTAHSMSE…RRPASSSVAE (140 aa). Positions 128 to 138 are enriched in polar residues; the sequence is IESRRPASSSV. Residues 128–166 are disordered; it reads IESRRPASSSVAEKDSTASSGMGAVKLRRKPNENGGHQQ. The tract at residues 140–177 is linker; it reads EKDSTASSGMGAVKLRRKPNENGGHQQKKALLWATQPE. [2Fe-2S] cluster contacts are provided by cysteine 202, cysteine 217, cysteine 220, and cysteine 222. The tract at residues 202–222 is fe-S binding site A; the sequence is CTVDFSAPRTRRKRACKGCTC. Residues 239–263 form a disordered region; the sequence is QLDPSEVGGTGGKRTEVTTTVKGPN. Cysteine 283, cysteine 286, cysteine 294, and cysteine 297 together coordinate [4Fe-4S] cluster. 2 short sequence motifs (cx2C motif) span residues 283-286 and 294-297; these read CGSC and CSSC. Positions 283-297 are fe-S binding site B; sequence CGSCFLGDAFRCSSC.

It belongs to the anamorsin family. Monomer. Interacts with TAH18. Interacts with MIA40. The cofactor is [2Fe-2S] cluster. [4Fe-4S] cluster is required as a cofactor.

The protein resides in the cytoplasm. Its subcellular location is the mitochondrion intermembrane space. In terms of biological role, component of the cytosolic iron-sulfur (Fe-S) protein assembly (CIA) machinery required for the maturation of extramitochondrial Fe-S proteins. Part of an electron transfer chain functioning in an early step of cytosolic Fe-S biogenesis, facilitating the de novo assembly of a [4Fe-4S] cluster on the scaffold complex CFD1-NBP35. Electrons are transferred to DRE2 from NADPH via the FAD- and FMN-containing protein TAH18. TAH18-DRE2 are also required for the assembly of the diferric tyrosyl radical cofactor of ribonucleotide reductase (RNR), probably by providing electrons for reduction during radical cofactor maturation in the catalytic small subunit RNR2. The chain is Fe-S cluster assembly protein DRE2 from Malassezia globosa (strain ATCC MYA-4612 / CBS 7966) (Dandruff-associated fungus).